Consider the following 214-residue polypeptide: Pyridoxine/pyridoxamine 5'-phosphate oxidase (214 aa).

Residues 8–11 (RLSY) and arginine 66 contribute to the substrate site. Residues 61–66 (RTVLLR), 76–77 (FT), lysine 83, and glutamine 105 contribute to the FMN site. Substrate-binding residues include tyrosine 123, arginine 127, and serine 131. The tract at residues 126 to 146 (SRPRESQLAAHASDPQSAPVS) is disordered. FMN contacts are provided by residues 141–142 (QS) and tryptophan 187. Substrate is bound at residue 193-195 (RMH). Position 197 (arginine 197) interacts with FMN.

The protein belongs to the pyridoxamine 5'-phosphate oxidase family. As to quaternary structure, homodimer. FMN serves as cofactor.

The enzyme catalyses pyridoxamine 5'-phosphate + O2 + H2O = pyridoxal 5'-phosphate + H2O2 + NH4(+). The catalysed reaction is pyridoxine 5'-phosphate + O2 = pyridoxal 5'-phosphate + H2O2. Its pathway is cofactor metabolism; pyridoxal 5'-phosphate salvage; pyridoxal 5'-phosphate from pyridoxamine 5'-phosphate: step 1/1. It participates in cofactor metabolism; pyridoxal 5'-phosphate salvage; pyridoxal 5'-phosphate from pyridoxine 5'-phosphate: step 1/1. Its function is as follows. Catalyzes the oxidation of either pyridoxine 5'-phosphate (PNP) or pyridoxamine 5'-phosphate (PMP) into pyridoxal 5'-phosphate (PLP). In Deinococcus deserti (strain DSM 17065 / CIP 109153 / LMG 22923 / VCD115), this protein is Pyridoxine/pyridoxamine 5'-phosphate oxidase.